Here is a 306-residue protein sequence, read N- to C-terminus: Esterase tropF (306 aa).

Residues Ser-147, Asp-248, and His-276 each act as charge relay system in the active site.

Belongs to the LovG family.

Its pathway is secondary metabolite biosynthesis. Functionally, esterase; part of the gene cluster that mediates the biosynthesis of the tropolone class of fungal maleic anhydrides. The pathway begins with the synthesis of 3-methylorcinaldehyde by the non-reducing polyketide synthase (PKS) tropA. 3-methylorcinaldehyde is the substrate for the FAD-dependent monooxygenase tropB to yield a dearomatized hydroxycyclohexadione. The 2-oxoglutarate-dependent dioxygenase tropC then performs the oxidative ring expansion to provide the first tropolone metabolite stipitaldehyde. Trop D converts stipitaldehyde into stipitacetal which is in turn converted to stipitalide by the short-chain dehydrogenase/reductase tropE. The next steps involve tropF, tropG, tropH, tropI and tropJ to form successive tropolone maleic anhydrides including stipitaldehydic, stipitatonic and stipitatic acids. The protein is Esterase tropF of Talaromyces stipitatus (strain ATCC 10500 / CBS 375.48 / QM 6759 / NRRL 1006) (Penicillium stipitatum).